The following is a 173-amino-acid chain: Transcriptional repressor NrdR (173 aa).

The segment at 3 to 34 (CPFCQHADTRVIDSRVSEDGATIRRRRECEAC) is a zinc-finger region. An ATP-cone domain is found at 49–139 (PAIVKSDGTR…VYRSFEDVAD (91 aa)).

It belongs to the NrdR family. Zn(2+) serves as cofactor.

In terms of biological role, negatively regulates transcription of bacterial ribonucleotide reductase nrd genes and operons by binding to NrdR-boxes. This Stenotrophomonas maltophilia (strain R551-3) protein is Transcriptional repressor NrdR.